The chain runs to 233 residues: 2,3,4,5-tetrahydropyridine-2,6-dicarboxylate N-acetyltransferase (233 aa).

The protein belongs to the transferase hexapeptide repeat family. DapH subfamily.

It catalyses the reaction (S)-2,3,4,5-tetrahydrodipicolinate + acetyl-CoA + H2O = L-2-acetamido-6-oxoheptanedioate + CoA. It functions in the pathway amino-acid biosynthesis; L-lysine biosynthesis via DAP pathway; LL-2,6-diaminopimelate from (S)-tetrahydrodipicolinate (acetylase route): step 1/3. In terms of biological role, catalyzes the transfer of an acetyl group from acetyl-CoA to tetrahydrodipicolinate. The chain is 2,3,4,5-tetrahydropyridine-2,6-dicarboxylate N-acetyltransferase from Thermotoga petrophila (strain ATCC BAA-488 / DSM 13995 / JCM 10881 / RKU-1).